Consider the following 534-residue polypeptide: Bifunctional purine biosynthesis protein PurH (534 aa).

Residues 1–148 (MNTVRPIRRA…KNHQDVTIVV (148 aa)) form the MGS-like domain.

Belongs to the PurH family.

The catalysed reaction is (6R)-10-formyltetrahydrofolate + 5-amino-1-(5-phospho-beta-D-ribosyl)imidazole-4-carboxamide = 5-formamido-1-(5-phospho-D-ribosyl)imidazole-4-carboxamide + (6S)-5,6,7,8-tetrahydrofolate. It carries out the reaction IMP + H2O = 5-formamido-1-(5-phospho-D-ribosyl)imidazole-4-carboxamide. Its pathway is purine metabolism; IMP biosynthesis via de novo pathway; 5-formamido-1-(5-phospho-D-ribosyl)imidazole-4-carboxamide from 5-amino-1-(5-phospho-D-ribosyl)imidazole-4-carboxamide (10-formyl THF route): step 1/1. It participates in purine metabolism; IMP biosynthesis via de novo pathway; IMP from 5-formamido-1-(5-phospho-D-ribosyl)imidazole-4-carboxamide: step 1/1. This chain is Bifunctional purine biosynthesis protein PurH, found in Shewanella denitrificans (strain OS217 / ATCC BAA-1090 / DSM 15013).